The primary structure comprises 596 residues: Nuclear receptor subfamily 2 group C member 2 (596 aa).

Ser-19 bears the Phosphoserine; by MAPK mark. Ser-46 is subject to Phosphoserine. 2 positions are modified to phosphoserine; by MAPK: Ser-55 and Ser-68. Ser-98 carries the post-translational modification Phosphoserine. The nuclear receptor DNA-binding region spans 114–189 (VEYCVVCGDK…MGMKMESVQS (76 aa)). NR C4-type zinc fingers lie at residues 117-137 (CVVC…CEGC) and 153-177 (CRSN…LKKC). Lys-192 participates in a covalent cross-link: Glycyl lysine isopeptide (Lys-Gly) (interchain with G-Cter in SUMO2). Ser-219 is subject to Phosphoserine. An N6-acetyllysine modification is found at Lys-231. The 243-residue stretch at 341 to 583 (GSIHVISRDQ…SIIPYILKME (243 aa)) folds into the NR LBD domain.

The protein belongs to the nuclear hormone receptor family. NR2 subfamily. As to quaternary structure, homodimer; can bind DNA as homodimer. Heterodimer; binds DNA as a heterodimer with NR2C1 required for chromatin remodeling and for binding to promoter regions such as globin DR1 repeats. Interacts with PCAF; the interaction preferentially occurs on the non-phosphorylated form and induces NR2C2-mediated transactivation activity and does not require the ligand-binding domain. Interacts (MAPK-mediated phosphorylated form) with NRIP1; the interaction promotes repression of NR2C2-mediated activity. Interacts with NR2C2AP; the interaction represses selective NR2C2-mediated transcriptional activity. Interacts with NLRP10. Interacts (via ligand-binding region) with transcriptional corepressor JAZF1; the interaction promotes NR2C2-mediated transcriptional repression. Post-translationally, phosphorylation on Ser-19 and Ser-68 is an important regulator of NR2C2-mediated transcriptional activity. Phosphorylation on these residues recruits the corepressor, NRIP1, leading to transcripional repression, whereas the non-phosphorylated form preferentially recruits the coactivator, PCAF.

Its subcellular location is the nucleus. Orphan nuclear receptor that can act as a repressor or activator of transcription. An important repressor of nuclear receptor signaling pathways such as retinoic acid receptor, retinoid X, vitamin D3 receptor, thyroid hormone receptor and estrogen receptor pathways. May regulate gene expression during the late phase of spermatogenesis. Together with NR2C1, forms the core of the DRED (direct repeat erythroid-definitive) complex that represses embryonic and fetal globin transcription including that of GATA1. Binds to hormone response elements (HREs) consisting of two 5'-AGGTCA-3' half site direct repeat consensus sequences. Plays a fundamental role in early embryonic development and embryonic stem cells. Required for normal spermatogenesis and cerebellum development. Appears to be important for neurodevelopmentally regulated behavior. Activates transcriptional activity of LHCG. Antagonist of PPARA-mediated transactivation. The sequence is that of Nuclear receptor subfamily 2 group C member 2 (NR2C2) from Homo sapiens (Human).